A 465-amino-acid chain; its full sequence is FAD-dependent oxidoreductase pigF (465 aa).

The signal sequence occupies residues 1 to 17 (MMLLTLLILSSVGLAAA). N95, N138, N260, and N327 each carry an N-linked (GlcNAc...) asparagine glycan. A lipid anchor (GPI-anchor amidated aspartate) is attached at D444. Residues 445–465 (SASGIWNLTNAVVLPGLLTGL) constitute a propeptide, removed in mature form. N451 carries N-linked (GlcNAc...) asparagine glycosylation.

Belongs to the beta-cyclopiazonate dehydrogenase family. FAD serves as cofactor.

The protein localises to the cell membrane. It functions in the pathway secondary metabolite biosynthesis. Its function is as follows. FAD-dependent oxidoreductase; part of the gene cluster that mediates the biosynthesis of azaphilone pigments (MonAzPs), a complex mixture of compounds with a common azaphilone skeleton very widely used as food colorants. Within the pathway, pigF desaturates C6(7) to afford the orange and red pigments from yellow pigments. The first step of the pathway is performed by the nrPKS pigA that forms the hexaketide precursor from successive condensations of five malonyl-CoA units, with a simple acetyl-CoA starter unit. The role of esterase pigG is not clear, but it may play at most a supplementary role in the formation of the benzaldehyde produced by the pigA nrPKS. This very reactive benzaldehyde is intercepted by the pigC ketoreductase that to provide the first stable enzyme-free MonAzPs intermediate, 6-(4-hydroxy-2-oxopentyl)-3-methyl-2,4-dioxocyclohexane carbaldehyde, also known as M7PKS-1. The FAD-dependent monooxygenase pigN hydroxylates M7PKS-1 at C-4, which triggers the formation of the pyran ring. PigJ, pigK and pigD are involved in the acetylation of the pyran ring. PigJ and pigK form the two subunits of a dedicated fungal FAS that produces the side chain fatty acyl moiety of MonAzPs and pigD transfers the fatty acyl chain to the C-4 alcohol. PigM and pigO are involved in the elimination of the omega-1 alcohol. PigM acts as an O-acetyltransferase that synthesizes the putative O-11 acetyl intermediate whereas pigO eliminates acetic acid to yield an intermediate with a C10(11) double bond. The dehydration of the C-11 alcohol followed by the reduction of the C6(7) double bond by the NAD(P)H-dependent oxidoreductase pigE increases the electrophilicity of the C-5 ketone of the resulting acyl benzopyran. This in turn sets up the C-5 ketone for an intramolecular Knoevenagel aldol condensation with the C-20 enol of the side chain. This condensation affords the characteristic linear tricyclic carbon skeletons of the yellow pigments that serve as the common precursors for the classical yellow pigments monascin and ankaflavin, orange pigments rubopunctatin and monascorubrin, and red pigments ribropunctamine and monascorubramine. The FAD-dependent oxidoreductase pigF is especially invoved in the biosynthesis of orange and red pigments via desaturation of C6(7). In Monascus ruber (Mold), this protein is FAD-dependent oxidoreductase pigF.